We begin with the raw amino-acid sequence, 224 residues long: Orotate phosphoribosyltransferase (224 aa).

5-phospho-alpha-D-ribose 1-diphosphate contacts are provided by residues K26, 73-74, R100, K101, K104, H106, and 127-135; these read YK and EDVTTAGTS. Residues T131 and R160 each contribute to the orotate site.

The protein belongs to the purine/pyrimidine phosphoribosyltransferase family. PyrE subfamily. In terms of assembly, homodimer. Mg(2+) serves as cofactor.

The enzyme catalyses orotidine 5'-phosphate + diphosphate = orotate + 5-phospho-alpha-D-ribose 1-diphosphate. The protein operates within pyrimidine metabolism; UMP biosynthesis via de novo pathway; UMP from orotate: step 1/2. In terms of biological role, catalyzes the transfer of a ribosyl phosphate group from 5-phosphoribose 1-diphosphate to orotate, leading to the formation of orotidine monophosphate (OMP). The polypeptide is Orotate phosphoribosyltransferase (Clostridium beijerinckii (strain ATCC 51743 / NCIMB 8052) (Clostridium acetobutylicum)).